A 225-amino-acid chain; its full sequence is C-reactive protein (225 aa).

The first 20 residues, 1–20 (MEKLLWCFLTLVSFSNMSDQ), serve as a signal peptide directing secretion. One can recognise a Pentraxin (PTX) domain in the interval 24 to 225 (HKKAFVFPKE…EVHVKPQLWP (202 aa)). A disulfide bridge connects residues C55 and C116. Residues N80, Q158, D159, and Q169 each coordinate Ca(2+).

It belongs to the pentraxin family. As to quaternary structure, homopentamer. Pentraxin (or pentaxin) have a discoid arrangement of 5 non-covalently bound subunits. Interacts with FCN1; may regulate monocyte activation by FCN1. Requires Ca(2+) as cofactor. In terms of tissue distribution, found in plasma.

It localises to the secreted. Functionally, displays several functions associated with host defense: it promotes agglutination, bacterial capsular swelling, phagocytosis and complement fixation through its calcium-dependent binding to phosphorylcholine. Can interact with DNA and histones and may scavenge nuclear material released from damaged circulating cells. This Oryctolagus cuniculus (Rabbit) protein is C-reactive protein (CRP).